The following is a 224-amino-acid chain: Non-structural protein 3 (224 aa).

Residues N34–F124 enclose the CoV 3a-like viroporin TM domain. 3 helical membrane passes run Q40–F60, Y69–Y88, and A95–F111. Residues T128–I203 enclose the CoV 3a-like viroporin CD domain.

It is found in the host membrane. The chain is Non-structural protein 3 from Sus scrofa (Pig).